The chain runs to 286 residues: L-rhamnose-binding lectin CSL1 (286 aa).

SUEL-type lectin domains lie at Thr-96–Leu-186 and Thr-193–Leu-280.

L-rhamnose binding lectin. Has hemagglutinating activity towards rabbit erythrocytes, but not human type B erythrocytes. Hemagglutinating activity is inhibited by smooth-type lipopolysaccharide (LPS) from K.pneumoniae, E.coli K-235, S.flexneri 1A, A.salmonicida and S.minnesota and rough-type LPS from S.flexneri, but not by rough-type LPS from E.coli K12 and E.coli EH100. Agglutinates E.coli K12 and B.subtilis. In Oncorhynchus keta (Chum salmon), this protein is L-rhamnose-binding lectin CSL1.